The primary structure comprises 802 residues: Exocyst complex component 6 (802 aa).

Belongs to the SEC15 family. The exocyst complex is composed of EXOC1, EXOC2, EXOC3, EXOC4, EXOC5, EXOC6, EXOC7 and EXOC8. Interacts with CNTRL. Interacts with RAB11A in a GTP-dependent manner.

Its subcellular location is the cytoplasm. The protein localises to the perinuclear region. It localises to the cell projection. It is found in the growth cone. The protein resides in the midbody. Its subcellular location is the midbody ring. Functionally, component of the exocyst complex involved in the docking of exocytic vesicles with fusion sites on the plasma membrane. Together with RAB11A, RAB3IP, RAB8A, PARD3, PRKCI, ANXA2, CDC42 and DNMBP promotes transcytosis of PODXL to the apical membrane initiation sites (AMIS), apical surface formation and lumenogenesis. The protein is Exocyst complex component 6 (Exoc6) of Mus musculus (Mouse).